The chain runs to 370 residues: Proto-oncogene Wnt-1 (370 aa).

Residues 1–27 (MGLWALLPGWVSATLLLALAALPAALA) form the signal peptide. The N-linked (GlcNAc...) asparagine glycan is linked to Asn29. Intrachain disulfides connect Cys93–Cys104, Cys143–Cys151, Cys153–Cys170, Cys218–Cys232, Cys220–Cys227, Cys299–Cys330, Cys315–Cys325, Cys329–Cys369, Cys345–Cys360, Cys347–Cys357, and Cys352–Cys353. Ser224 is lipidated: O-palmitoleoyl serine; by PORCN. Residues Asn316 and Asn346 are each glycosylated (N-linked (GlcNAc...) asparagine). A glycan (N-linked (GlcNAc...) asparagine) is linked at Asn359.

Belongs to the Wnt family. Forms a soluble 1:1 complex with AFM; this prevents oligomerization and is required for prolonged biological activity. The complex with AFM may represent the physiological form in body fluids. Interacts with PORCN. Interacts with RSPO1, RSPO2 and RSPO3. Interacts with WLS. Palmitoleoylation is required for efficient binding to frizzled receptors. Palmitoleoylation is necessary for proper trafficking to cell surface. Depalmitoleoylated by NOTUM, leading to inhibit Wnt signaling pathway.

Its subcellular location is the secreted. The protein resides in the extracellular space. The protein localises to the extracellular matrix. In terms of biological role, ligand for members of the frizzled family of seven transmembrane receptors. Acts in the canonical Wnt signaling pathway by promoting beta-catenin-dependent transcriptional activation. In some developmental processes, is also a ligand for the coreceptor RYK, thus triggering Wnt signaling. Plays an essential role in the development of the embryonic brain and central nervous system (CNS). Has a role in osteoblast function, bone development and bone homeostasis. This chain is Proto-oncogene Wnt-1 (WNT1), found in Homo sapiens (Human).